The primary structure comprises 256 residues: uncharacterized protein (256 aa).

It belongs to the glycosyltransferase 2 family.

This is an uncharacterized protein from Acanthamoeba polyphaga mimivirus (APMV).